We begin with the raw amino-acid sequence, 699 residues long: D-(-)-3-hydroxybutyrate oligomer hydrolase (699 aa).

The N-terminal stretch at 1-33 is a signal peptide; sequence MTAIRGGSRRAPGLALALLGGVLLGACHGDENA. Catalysis depends on S311, which acts as the Charge relay system.

Belongs to the D-(-)-3-hydroxybutyrate oligomer hydrolase family.

Its subcellular location is the secreted. The catalysed reaction is (3R)-hydroxybutanoate dimer + H2O = 2 (R)-3-hydroxybutanoate + H(+). It functions in the pathway lipid metabolism; butanoate metabolism. In terms of biological role, participates in the degradation of poly-3-hydroxybutyrate (PHB). It works downstream of poly(3-hydroxybutyrate) depolymerase, hydrolyzing D(-)-3-hydroxybutyrate oligomers of various length (3HB-oligomers) into 3HB-monomers. This is D-(-)-3-hydroxybutyrate oligomer hydrolase from Burkholderia mallei (strain SAVP1).